A 953-amino-acid chain; its full sequence is Zinc finger protein 618 (953 aa).

Met-1 is modified (N-acetylmethionine). The tract at residues 1–56 (MSQPDGAAAPQVDGASAPGRKSAVNRERLKRSQKSSKVEGPEPVPAEASLSAEQGT) is disordered. Glycyl lysine isopeptide (Lys-Gly) (interchain with G-Cter in SUMO2) cross-links involve residues Lys-63 and Lys-81. 2 consecutive C2H2-type zinc fingers follow at residues 146–168 (YECG…VRAH) and 187–209 (YTCD…RDLH). Lys-238 is covalently cross-linked (Glycyl lysine isopeptide (Lys-Gly) (interchain with G-Cter in SUMO2)). The C2H2-type 3 zinc-finger motif lies at 255-277 (YTCEFCGKQYKYYTPYQEHVALH). Disordered stretches follow at residues 283–305 (APGW…EVTP) and 337–390 (TPPA…SSEP). A compositionally biased stretch (polar residues) spans 339–354 (PATQTQTFRAPNSGSP). The segment covering 365-379 (FSRRVESKAQNHFEE) has biased composition (basic and acidic residues). The segment at 391 to 413 (YTCGACGIQFQFYSNLLEHMQSH) adopts a C2H2-type 4 zinc-finger fold. Polar residues predominate over residues 419–428 (NNITSNQSRS). The tract at residues 419–461 (NNITSNQSRSPPAAVEEKWKPQAQRNSANNTTTSGLTPNSVIP) is disordered. Lys-436 participates in a covalent cross-link: Glycyl lysine isopeptide (Lys-Gly) (interchain with G-Cter in SUMO2). Residues 441-458 (AQRNSANNTTTSGLTPNS) show a composition bias toward polar residues.

Belongs to the krueppel C2H2-type zinc-finger protein family. As to quaternary structure, interacts with UHRF2.

It is found in the nucleus. Its subcellular location is the chromosome. Functionally, regulates UHRF2 function as a specific 5-hydroxymethylcytosine (5hmC) reader by regulating its chromatin localization. The chain is Zinc finger protein 618 (Znf618) from Mus musculus (Mouse).